A 115-amino-acid polypeptide reads, in one-letter code: uncharacterized protein (115 aa).

This is an uncharacterized protein from Bacillus subtilis (strain 168).